The following is a 148-amino-acid chain: 3-dehydroquinate dehydratase (148 aa).

Catalysis depends on Tyr-23, which acts as the Proton acceptor. Substrate is bound by residues Asn-75, His-81, and Asp-88. The active-site Proton donor is the His-101. Residues 102–103 and Arg-112 each bind substrate; that span reads LS.

Belongs to the type-II 3-dehydroquinase family. Homododecamer.

The enzyme catalyses 3-dehydroquinate = 3-dehydroshikimate + H2O. The protein operates within metabolic intermediate biosynthesis; chorismate biosynthesis; chorismate from D-erythrose 4-phosphate and phosphoenolpyruvate: step 3/7. Its function is as follows. Catalyzes a trans-dehydration via an enolate intermediate. This is 3-dehydroquinate dehydratase from Cellvibrio japonicus (strain Ueda107) (Pseudomonas fluorescens subsp. cellulosa).